A 577-amino-acid chain; its full sequence is MKRTALIGQLSTTHLDQAVTLQGWVNRRRDLGGLIFLELRDRSGLVQVQVEPDSPAFAQADQLRAEYVAEVEGIYRARPENQRKGGAADYEVIASRVKVLNTAKTPPFELDKGESVAEDIRLKYRYLDLRRPEMQRHLLLRSRAMAAVTAFLDSSGFVQVETPMLTKSTPEGARDFLVPSRLNPGEFYALPQSPQLFKQLLMIAGYDRYYQFARCFRDEDLRADRQPDFTQLDMEMSFVEQDDVLELQEGLMAHVFKATLDVDLPRPFPRLSYFDAMDRYGSDKPDLRFESALVDVTDLFQGGEFKAFAAAQSVKVLAAAELTRKQIDELERVAKQNGAGGLAWLKRDGDSFTGGISKFVGSVAPQLIKRSGVQDGGTLLFAAGDWKKAVTALGAVRLAVRDLFDLTSSGPRFHVSWVTDFPQLEFDEDSGTWTYMHHPFTAPHPDDAELFGTLRQGEIRAQAYDLVLNGFEVGGGSVRIHDPAVQTKMFEAIGFTEAQAREKFGFFMDALEYGTPPHGGIAWGFDRLVMVMSGASSIREVIAFPKNNRGADLMAEAPSLVDDAQLAELGVGVLSPS.

Residue Glu171 participates in L-aspartate binding. The interval 195–198 (QLFK) is aspartate. Arg217 contacts L-aspartate. ATP-binding positions include 217 to 219 (RDE) and Gln226. His437 provides a ligand contact to L-aspartate. Glu472 provides a ligand contact to ATP. Position 479 (Arg479) interacts with L-aspartate. 524-527 (GFDR) serves as a coordination point for ATP.

This sequence belongs to the class-II aminoacyl-tRNA synthetase family. Type 1 subfamily. Homodimer.

The protein resides in the cytoplasm. It catalyses the reaction tRNA(Asp) + L-aspartate + ATP = L-aspartyl-tRNA(Asp) + AMP + diphosphate. Its function is as follows. Catalyzes the attachment of L-aspartate to tRNA(Asp) in a two-step reaction: L-aspartate is first activated by ATP to form Asp-AMP and then transferred to the acceptor end of tRNA(Asp). The protein is Aspartate--tRNA ligase of Deinococcus deserti (strain DSM 17065 / CIP 109153 / LMG 22923 / VCD115).